A 241-amino-acid polypeptide reads, in one-letter code: Ubiquinone biosynthesis O-methyltransferase (241 aa).

S-adenosyl-L-methionine contacts are provided by arginine 44, glycine 63, aspartate 84, and methionine 128.

Belongs to the methyltransferase superfamily. UbiG/COQ3 family.

It carries out the reaction a 3-demethylubiquinol + S-adenosyl-L-methionine = a ubiquinol + S-adenosyl-L-homocysteine + H(+). The enzyme catalyses a 3-(all-trans-polyprenyl)benzene-1,2-diol + S-adenosyl-L-methionine = a 2-methoxy-6-(all-trans-polyprenyl)phenol + S-adenosyl-L-homocysteine + H(+). The protein operates within cofactor biosynthesis; ubiquinone biosynthesis. Functionally, O-methyltransferase that catalyzes the 2 O-methylation steps in the ubiquinone biosynthetic pathway. In Hydrogenovibrio crunogenus (strain DSM 25203 / XCL-2) (Thiomicrospira crunogena), this protein is Ubiquinone biosynthesis O-methyltransferase.